Here is a 505-residue protein sequence, read N- to C-terminus: Calcium/calmodulin-dependent protein kinase kinase 1 (505 aa).

The disordered stretch occupies residues histidine 27–proline 66. Phosphoserine occurs at positions 67 and 74. Arginine 78 is modified (asymmetric dimethylarginine). Position 100 is a phosphoserine (serine 100). The residue at position 108 (threonine 108) is a Phosphothreonine. The Protein kinase domain occupies tyrosine 128–valine 409. Residues isoleucine 134–valine 142 and lysine 157 contribute to the ATP site. The segment at glutamine 167–glutamine 189 is RP domain. Residue aspartate 275 is the Proton acceptor of the active site. The segment at lysine 435–leucine 440 is autoinhibitory domain. Residues valine 438 to phenylalanine 463 form a calmodulin-binding region. Phosphoserine occurs at positions 458, 475, and 492. The tract at residues glycine 460 to serine 505 is disordered.

Belongs to the protein kinase superfamily. Ser/Thr protein kinase family. As to quaternary structure, interacts with CAMK4 and calmodulin. Post-translationally, appears to be autophosphorylated. Phosphorylated at multiple sites by PRCAKA/PKA. Phosphorylation of Ser-458 is blocked upon binding to Ca(2+)/calmodulin. May be phosphorylated by CAMK1 and CAMK4. As to expression, mostly expressed in the brain with higher levels in cortex and hippocampus. Lower expression levels were detected in striatum, nucleus accumbens and cerebellum (at protein level). Abundant in forebrain, weaker in cerebellum and also detected in thymus and spleen.

Its subcellular location is the cytoplasm. It localises to the nucleus. It catalyses the reaction L-seryl-[protein] + ATP = O-phospho-L-seryl-[protein] + ADP + H(+). It carries out the reaction L-threonyl-[protein] + ATP = O-phospho-L-threonyl-[protein] + ADP + H(+). With respect to regulation, activated by Ca(2+)/calmodulin. Binding of calmodulin may relieve intrasteric autoinhibition. Partially inhibited upon phosphorylation by PRCAKA/PKA. May be regulated through phosphorylation by CAMK1 and CAMK4. Functionally, calcium/calmodulin-dependent protein kinase that belongs to a proposed calcium-triggered signaling cascade involved in a number of cellular processes. Phosphorylates CAMK1, CAMK1D, CAMK1G and CAMK4. Involved in regulating cell apoptosis. Promotes cell survival by phosphorylating AKT1/PKB that inhibits pro-apoptotic BAD/Bcl2-antagonist of cell death. The protein is Calcium/calmodulin-dependent protein kinase kinase 1 (Camkk1) of Rattus norvegicus (Rat).